A 667-amino-acid chain; its full sequence is Alpha-1,4-glucan:maltose-1-phosphate maltosyltransferase (667 aa).

Residues Lys-261, Gln-321, and Asp-356 each coordinate alpha-maltose 1-phosphate. Asp-392 (nucleophile) is an active-site residue. Asn-393 serves as a coordination point for alpha-maltose 1-phosphate. Glu-421 functions as the Proton donor in the catalytic mechanism. 534–535 (KY) lines the alpha-maltose 1-phosphate pocket.

Belongs to the glycosyl hydrolase 13 family. GlgE subfamily. In terms of assembly, homodimer.

It carries out the reaction alpha-maltose 1-phosphate + [(1-&gt;4)-alpha-D-glucosyl](n) = [(1-&gt;4)-alpha-D-glucosyl](n+2) + phosphate. Functionally, maltosyltransferase that uses maltose 1-phosphate (M1P) as the sugar donor to elongate linear or branched alpha-(1-&gt;4)-glucans. Is involved in a branched alpha-glucan biosynthetic pathway from trehalose, together with TreS, Mak and GlgB. The sequence is that of Alpha-1,4-glucan:maltose-1-phosphate maltosyltransferase from Methylacidiphilum infernorum (isolate V4) (Methylokorus infernorum (strain V4)).